Here is a 397-residue protein sequence, read N- to C-terminus: Phosphoglycerate kinase (397 aa).

Substrate contacts are provided by residues 25–27 (DLN), arginine 41, 64–67 (HLGR), arginine 118, and arginine 151. ATP contacts are provided by residues lysine 202, glutamate 324, and 350–353 (GGDT).

The protein belongs to the phosphoglycerate kinase family. Monomer.

The protein resides in the cytoplasm. It carries out the reaction (2R)-3-phosphoglycerate + ATP = (2R)-3-phospho-glyceroyl phosphate + ADP. It participates in carbohydrate degradation; glycolysis; pyruvate from D-glyceraldehyde 3-phosphate: step 2/5. This chain is Phosphoglycerate kinase, found in Herminiimonas arsenicoxydans.